Reading from the N-terminus, the 474-residue chain is tRNA-2-methylthio-N(6)-dimethylallyladenosine synthase (474 aa).

One can recognise an MTTase N-terminal domain in the interval 3-120 (KKLHIKTWGC…LPEMIEQIQQ (118 aa)). [4Fe-4S] cluster is bound by residues C12, C49, C83, C157, C161, and C164. The 233-residue stretch at 143 to 375 (RAEGPSAFVS…QDRITQQAMR (233 aa)) folds into the Radical SAM core domain. Residues 378-441 (RQMLGTVQRI…TNSLRGKFIR (64 aa)) form the TRAM domain.

The protein belongs to the methylthiotransferase family. MiaB subfamily. Monomer. Requires [4Fe-4S] cluster as cofactor.

Its subcellular location is the cytoplasm. The catalysed reaction is N(6)-dimethylallyladenosine(37) in tRNA + (sulfur carrier)-SH + AH2 + 2 S-adenosyl-L-methionine = 2-methylsulfanyl-N(6)-dimethylallyladenosine(37) in tRNA + (sulfur carrier)-H + 5'-deoxyadenosine + L-methionine + A + S-adenosyl-L-homocysteine + 2 H(+). In terms of biological role, catalyzes the methylthiolation of N6-(dimethylallyl)adenosine (i(6)A), leading to the formation of 2-methylthio-N6-(dimethylallyl)adenosine (ms(2)i(6)A) at position 37 in tRNAs that read codons beginning with uridine. The protein is tRNA-2-methylthio-N(6)-dimethylallyladenosine synthase of Shewanella loihica (strain ATCC BAA-1088 / PV-4).